Reading from the N-terminus, the 89-residue chain is Small ribosomal subunit protein uS15 (89 aa).

Belongs to the universal ribosomal protein uS15 family. In terms of assembly, part of the 30S ribosomal subunit. Forms a bridge to the 50S subunit in the 70S ribosome, contacting the 23S rRNA.

One of the primary rRNA binding proteins, it binds directly to 16S rRNA where it helps nucleate assembly of the platform of the 30S subunit by binding and bridging several RNA helices of the 16S rRNA. In terms of biological role, forms an intersubunit bridge (bridge B4) with the 23S rRNA of the 50S subunit in the ribosome. The chain is Small ribosomal subunit protein uS15 from Halalkalibacterium halodurans (strain ATCC BAA-125 / DSM 18197 / FERM 7344 / JCM 9153 / C-125) (Bacillus halodurans).